The sequence spans 387 residues: Alkanesulfonate monooxygenase (387 aa).

This sequence belongs to the SsuD family.

The enzyme catalyses an alkanesulfonate + FMNH2 + O2 = an aldehyde + FMN + sulfite + H2O + 2 H(+). Its function is as follows. Catalyzes the desulfonation of aliphatic sulfonates. The polypeptide is Alkanesulfonate monooxygenase (Cupriavidus pinatubonensis (strain JMP 134 / LMG 1197) (Cupriavidus necator (strain JMP 134))).